Reading from the N-terminus, the 308-residue chain is Aspartate carbamoyltransferase catalytic subunit (308 aa).

2 residues coordinate carbamoyl phosphate: Arg-59 and Thr-60. Lys-87 lines the L-aspartate pocket. 3 residues coordinate carbamoyl phosphate: Arg-109, His-137, and Gln-140. Arg-170 and Arg-224 together coordinate L-aspartate. Carbamoyl phosphate contacts are provided by Gly-265 and Pro-266.

This sequence belongs to the aspartate/ornithine carbamoyltransferase superfamily. ATCase family. As to quaternary structure, heterododecamer (2C3:3R2) of six catalytic PyrB chains organized as two trimers (C3), and six regulatory PyrI chains organized as three dimers (R2).

The catalysed reaction is carbamoyl phosphate + L-aspartate = N-carbamoyl-L-aspartate + phosphate + H(+). The protein operates within pyrimidine metabolism; UMP biosynthesis via de novo pathway; (S)-dihydroorotate from bicarbonate: step 2/3. Its function is as follows. Catalyzes the condensation of carbamoyl phosphate and aspartate to form carbamoyl aspartate and inorganic phosphate, the committed step in the de novo pyrimidine nucleotide biosynthesis pathway. This chain is Aspartate carbamoyltransferase catalytic subunit, found in Flavobacterium johnsoniae (strain ATCC 17061 / DSM 2064 / JCM 8514 / BCRC 14874 / CCUG 350202 / NBRC 14942 / NCIMB 11054 / UW101) (Cytophaga johnsonae).